The sequence spans 358 residues: Histidinol-phosphate aminotransferase (358 aa).

At K218 the chain carries N6-(pyridoxal phosphate)lysine.

This sequence belongs to the class-II pyridoxal-phosphate-dependent aminotransferase family. Histidinol-phosphate aminotransferase subfamily. In terms of assembly, homodimer. It depends on pyridoxal 5'-phosphate as a cofactor.

The catalysed reaction is L-histidinol phosphate + 2-oxoglutarate = 3-(imidazol-4-yl)-2-oxopropyl phosphate + L-glutamate. It participates in amino-acid biosynthesis; L-histidine biosynthesis; L-histidine from 5-phospho-alpha-D-ribose 1-diphosphate: step 7/9. The chain is Histidinol-phosphate aminotransferase from Dehalococcoides mccartyi (strain ATCC BAA-2266 / KCTC 15142 / 195) (Dehalococcoides ethenogenes (strain 195)).